Here is a 179-residue protein sequence, read N- to C-terminus: Apoptosis regulator Bcl-2 homolog (179 aa).

Residues 76 to 95 (ELFKDLINWGRICGFIVFSA) carry the BH1 motif. Residues 126-141 (PWMISHGGQEEFLAFS) carry the BH2 motif.

The protein belongs to the Bcl-2 family. Interacts with host BECN1 (via BH3 homology domain); this interaction allows the virus to inhibit BECN1, and thus autophagy. Interacts with host BID. Interacts with host BAX.

Its subcellular location is the host mitochondrion. The protein resides in the host endoplasmic reticulum. Functionally, suppresses apoptosis in host cell to promote the viral replication. Has the ability to potentially bind to all the members of the proapoptotic Bcl-2 family. Inhibits autophagy by interacting with host Beclin 1 (BECN1). The protein is Apoptosis regulator Bcl-2 homolog of Ornithodoros (relapsing fever ticks).